The following is a 309-amino-acid chain: ATP-dependent Clp protease proteolytic subunit 3, chloroplastic (309 aa).

A chloroplast-targeting transit peptide spans 1–70 (MEMSLRLASS…WDVSSFSIDS (70 aa)). Position 71 is an N-acetylvaline (Val71). Residue Ser164 is the Nucleophile of the active site. Residue His189 is part of the active site. Thr194 carries the phosphothreonine modification. The segment at 290-309 (DNTNLPSERSMTQNGYAAIE) is disordered. Positions 292–309 (TNLPSERSMTQNGYAAIE) are enriched in polar residues.

The protein belongs to the peptidase S14 family. As to quaternary structure, component of the chloroplastic Clp protease core complex which consist of at least 16 proteins: CLPP4 (3 copies), CLPP5 (3 copies), CLPR4 (2 copies), ClpP1 (1 copy), CLPP6 (1 copy), CLPR2 (1 copy), CLPT1 (1 copy), CLPT2 (1 copy) and 3 copies of CLPP3 and/or CLPR1 and/or CLPR3. The core complex is organized in two heptameric rings, one containing CLPP3,4,5,6 in a 1:2:3:1 ratio and the other CLPP1 and CLPR1,2,3,4 in a 3:1:1:1:1 ratio. Interacts with CHIP. Ubiquitinated in vitro by CHIP. Mostly expressed in leaves. Also detected in stems, and to a lower extent, in roots (at protein level).

The protein resides in the plastid. Its subcellular location is the chloroplast stroma. The catalysed reaction is Hydrolysis of proteins to small peptides in the presence of ATP and magnesium. alpha-casein is the usual test substrate. In the absence of ATP, only oligopeptides shorter than five residues are hydrolyzed (such as succinyl-Leu-Tyr-|-NHMec, and Leu-Tyr-Leu-|-Tyr-Trp, in which cleavage of the -Tyr-|-Leu- and -Tyr-|-Trp bonds also occurs).. Its function is as follows. Cleaves peptides in various proteins in a process that requires ATP hydrolysis. Has a chymotrypsin-like activity. Plays a major role in the degradation of misfolded proteins. In the absence of CLPP3, modified ClpPR core(s) could be formed, albeit at strongly reduced levels. The polypeptide is ATP-dependent Clp protease proteolytic subunit 3, chloroplastic (Arabidopsis thaliana (Mouse-ear cress)).